The chain runs to 359 residues: Chaperone protein DnaJ (359 aa).

The region spanning 3–68 (DYYEILGVPK…ERRQTYDRYG (66 aa)) is the J domain. The CR-type zinc-finger motif lies at 128–205 (GVSKDIKYKI…CAGKGFIEEQ (78 aa)). Cys-141, Cys-144, Cys-157, Cys-160, Cys-179, Cys-182, Cys-193, and Cys-196 together coordinate Zn(2+). CXXCXGXG motif repeat units follow at residues 141-148 (CKTCDGTG), 157-164 (CPYCGGSG), 179-186 (CPFCKGSG), and 193-200 (CHDCAGKG).

Belongs to the DnaJ family. In terms of assembly, homodimer. Zn(2+) is required as a cofactor.

The protein resides in the cytoplasm. Its function is as follows. Participates actively in the response to hyperosmotic and heat shock by preventing the aggregation of stress-denatured proteins and by disaggregating proteins, also in an autonomous, DnaK-independent fashion. Unfolded proteins bind initially to DnaJ; upon interaction with the DnaJ-bound protein, DnaK hydrolyzes its bound ATP, resulting in the formation of a stable complex. GrpE releases ADP from DnaK; ATP binding to DnaK triggers the release of the substrate protein, thus completing the reaction cycle. Several rounds of ATP-dependent interactions between DnaJ, DnaK and GrpE are required for fully efficient folding. Also involved, together with DnaK and GrpE, in the DNA replication of plasmids through activation of initiation proteins. The sequence is that of Chaperone protein DnaJ from Campylobacter hominis (strain ATCC BAA-381 / DSM 21671 / CCUG 45161 / LMG 19568 / NCTC 13146 / CH001A).